Here is a 66-residue protein sequence, read N- to C-terminus: Large ribosomal subunit protein bL33c (66 aa).

The protein belongs to the bacterial ribosomal protein bL33 family.

The protein resides in the plastid. It is found in the chloroplast. This chain is Large ribosomal subunit protein bL33c (rpl33), found in Arabidopsis thaliana (Mouse-ear cress).